The primary structure comprises 1009 residues: Type VII secretion system accessory factor EsaA (1009 aa).

A run of 6 helical transmembrane segments spans residues 7-27, 822-842, 869-889, 903-923, 928-948, and 979-999; these read IYALIVTLIIIIAIVSMIFFV, ISPTLFVLLMYLLSMITAYIF, VITSGVIGTTGLVEGLIVGLI, KFILMVILTMMVFVLINTYLL, SIGMFLMIAALGLYFVAMNNL, and IGLALVILTVLVIIGFVLNMF.

The protein belongs to the EsaA family. Homodimer. Interacts with EssB.

It localises to the cell membrane. Component of the type VII secretion system (Ess). Provides together with EssB and other components such as EssC and EssE a secretion platform across the cytoplasmic membrane in the host. This Staphylococcus aureus (strain Mu50 / ATCC 700699) protein is Type VII secretion system accessory factor EsaA.